Consider the following 74-residue polypeptide: U3-agatoxin-Ao1d (74 aa).

Positions 1-20 are cleaved as a signal peptide; it reads MKAAISLLLLSALLFVVIEA. A propeptide spanning residues 21-34 is cleaved from the precursor; that stretch reads ITYEEGKELFQGER. Disulfide bonds link cysteine 37–cysteine 53, cysteine 44–cysteine 58, cysteine 52–cysteine 68, and cysteine 60–cysteine 66. Position 72 is a serine amide (serine 72).

It belongs to the neurotoxin 07 (Beta/delta-agtx) family. 02 (aga-3) subfamily. Expressed by the venom gland.

It localises to the secreted. Insecticidal neurotoxin that induces an irreversible spastic paralysis when injected into insects. Modifies presynaptic voltage-gated sodium channels (Nav), causing them to open at the normal resting potential of the nerve. This leads to spontaneous release of neurotransmitter and repetitive action potentials in motor neurons. This is U3-agatoxin-Ao1d from Agelena orientalis (Funnel-web spider).